Reading from the N-terminus, the 392-residue chain is Succinate--CoA ligase [ADP-forming] subunit beta (392 aa).

Residues 9-248 enclose the ATP-grasp domain; sequence KDILRKFGVA…TNEEDPFEVE (240 aa). ATP-binding positions include Lys-50, 57–59, Glu-103, Met-106, and Glu-111; that span reads GRG. Residues Asn-203 and Asp-217 each contribute to the Mg(2+) site. Substrate is bound by residues Asn-268 and 325 to 327; that span reads GIV.

Belongs to the succinate/malate CoA ligase beta subunit family. As to quaternary structure, heterotetramer of two alpha and two beta subunits. Mg(2+) serves as cofactor.

The catalysed reaction is succinate + ATP + CoA = succinyl-CoA + ADP + phosphate. The enzyme catalyses GTP + succinate + CoA = succinyl-CoA + GDP + phosphate. Its pathway is carbohydrate metabolism; tricarboxylic acid cycle; succinate from succinyl-CoA (ligase route): step 1/1. Functionally, succinyl-CoA synthetase functions in the citric acid cycle (TCA), coupling the hydrolysis of succinyl-CoA to the synthesis of either ATP or GTP and thus represents the only step of substrate-level phosphorylation in the TCA. The beta subunit provides nucleotide specificity of the enzyme and binds the substrate succinate, while the binding sites for coenzyme A and phosphate are found in the alpha subunit. The polypeptide is Succinate--CoA ligase [ADP-forming] subunit beta (Pelodictyon phaeoclathratiforme (strain DSM 5477 / BU-1)).